Consider the following 477-residue polypeptide: Sensor protein kinase PmrB (477 aa).

2 helical membrane-spanning segments follow: residues 13 to 33 and 161 to 181; these read LLVN…ALTY and LLLF…GGLV. Residues 186–238 enclose the HAMP domain; sequence ARGLAPLREVQAEVQQRSARHLQPIAVEAVPLEIRGLIDELNLLLERLRTALE. Positions 246–459 constitute a Histidine kinase domain; it reads DAAHEIRTPL…EVQVFLPKTQ (214 aa). Histidine 249 is modified (phosphohistidine; by autocatalysis). The segment at 455-477 is disordered; the sequence is LPKTQPDATRPPARGPDSGRSHI.

The protein localises to the membrane. It catalyses the reaction ATP + protein L-histidine = ADP + protein N-phospho-L-histidine.. In terms of biological role, member of the two-component regulatory system PmrA/PmrB that plays a role in the regulation of resistance towards polymyxin B and cationic antimicrobial peptides in response to limiting concentrations of Mg(2+). Also autoregulates its own pmrAB operon under Mg(2+)-limiting conditions. May function as a membrane-associated protein kinase that phosphorylates PmrA in response to environmental signals leading to activation of specific gene promoters. The sequence is that of Sensor protein kinase PmrB (pmrB) from Pseudomonas aeruginosa (strain ATCC 15692 / DSM 22644 / CIP 104116 / JCM 14847 / LMG 12228 / 1C / PRS 101 / PAO1).